The sequence spans 114 residues: Ribonuclease P protein component (114 aa).

The protein belongs to the RnpA family. Consists of a catalytic RNA component (M1 or rnpB) and a protein subunit.

The catalysed reaction is Endonucleolytic cleavage of RNA, removing 5'-extranucleotides from tRNA precursor.. Functionally, RNaseP catalyzes the removal of the 5'-leader sequence from pre-tRNA to produce the mature 5'-terminus. It can also cleave other RNA substrates such as 4.5S RNA. The protein component plays an auxiliary but essential role in vivo by binding to the 5'-leader sequence and broadening the substrate specificity of the ribozyme. This Staphylococcus haemolyticus (strain JCSC1435) protein is Ribonuclease P protein component.